Consider the following 153-residue polypeptide: Transcriptional repressor NrdR (153 aa).

A zinc finger lies at cysteine 3–cysteine 34. In terms of domain architecture, ATP-cone spans isoleucine 49–threonine 139.

It belongs to the NrdR family. It depends on Zn(2+) as a cofactor.

Negatively regulates transcription of bacterial ribonucleotide reductase nrd genes and operons by binding to NrdR-boxes. The polypeptide is Transcriptional repressor NrdR (Caldicellulosiruptor bescii (strain ATCC BAA-1888 / DSM 6725 / KCTC 15123 / Z-1320) (Anaerocellum thermophilum)).